A 314-amino-acid polypeptide reads, in one-letter code: uncharacterized protein (314 aa).

Transmembrane regions (helical) follow at residues 4–23, 36–53, 68–90, 97–116, 131–153, 174–196, 200–222, 229–251, 261–283, and 290–309; these read FFIGDLLPIIVIMLLGYFSG, FNKLVLNYALPAALFVSI, TLVSLVVIVGCFFFSWFGCYKFF, AAVCALIAGSPTIGFLGFAV, VAIISIIVNAITIPIGLYLLNPS, PVVWAPVLATILVLVGVKIPAAW, FNLIAKANSGVAVFAAGLTLAAH, EIAYNTFLKLILMPLALLLVGMA, MMVLAGALPPAFSGIIIASRFNV, and ASLAVSVLGFVVTAPLWIYV.

Belongs to the auxin efflux carrier (TC 2.A.69) family.

It localises to the cell membrane. This is an uncharacterized protein from Escherichia coli O157:H7.